The primary structure comprises 906 residues: Formin-like protein 18 (906 aa).

The first 25 residues, 1–25 (MSKLRWLIMAFLVCLLLLTPKDLEG), serve as a signal peptide directing secretion. Residues 120–140 (MVVVGLSAACVALVTLVGICF) form a helical membrane-spanning segment. 2 disordered regions span residues 267-416 (AGGG…QADP) and 854-906 (NAKA…DSDD). Residues 274-292 (AAPPPPAGPPPPAPPPLPP) are compositionally biased toward pro residues. The span at 293–303 (SHHHHHGHHPP) shows a compositional bias: basic residues. 3 stretches are compositionally biased toward pro residues: residues 320 to 339 (APPP…PAPS), 348 to 375 (GPPP…PPPG), and 383 to 402 (GPPP…PPFK). Composition is skewed to low complexity over residues 403-416 (KSPG…QADP) and 854-877 (NAKA…QSSF). The 456-residue stretch at 411 to 866 (AAQADPNKAK…AKKQQQPTPA (456 aa)) folds into the FH2 domain. Over residues 878–889 (RDPRQQIQDRRA) the composition is skewed to basic and acidic residues. The span at 897–906 (SSSSSSDSDD) shows a compositional bias: low complexity.

The protein belongs to the formin-like family. Class-I subfamily.

The protein localises to the membrane. This chain is Formin-like protein 18 (FH18), found in Oryza sativa subsp. japonica (Rice).